The primary structure comprises 430 residues: MTRSEALFEQAKKTIPGGVNSPVRAFNGVGGSPLFIEKANGAYIYDADGKAYIDYVGSWGPMILGHNHPKIRAAVLAAVENGLSFGAPTELEVQMAEKVISMVPSIEQVRMVSSGTEATMSAIRLARGFTNRDKILKFEGCYHGHADCLLVKAGSGALTLGQPSSPGIPEDFAKHTLTAVYNDLDSVRTLFEQYPTDISCIIIEPVAGNMNCIPPIPGFLQGLRDICDEFGALMIIDEVMTGFRVSQSGAQGYYGVTPDLTTLGKVIGGGMPVGAFGGRKDVMQFIAPTGPVYQAGTLSGNPIAMSAGLAQMEALCEEGLYEKLSAKTKRIAEGFKAAADKHGIPMAINYVGGMFGFFFTEQPEITRFDQVTQCNIEQFRIFYHGMLDEGVYLAPSAYEAGFLSMAHGEEEMRLTLEAADRVLASMKAAS.

Position 265 is an N6-(pyridoxal phosphate)lysine (Lys265).

Belongs to the class-III pyridoxal-phosphate-dependent aminotransferase family. HemL subfamily. In terms of assembly, homodimer. Requires pyridoxal 5'-phosphate as cofactor.

Its subcellular location is the cytoplasm. The catalysed reaction is (S)-4-amino-5-oxopentanoate = 5-aminolevulinate. It participates in porphyrin-containing compound metabolism; protoporphyrin-IX biosynthesis; 5-aminolevulinate from L-glutamyl-tRNA(Glu): step 2/2. This chain is Glutamate-1-semialdehyde 2,1-aminomutase, found in Shewanella baltica (strain OS155 / ATCC BAA-1091).